A 93-amino-acid chain; its full sequence is Ferredoxin-2 (93 aa).

A 2Fe-2S ferredoxin-type domain is found at 2–91; the sequence is YKVTLKTPDG…DVVIETHKED (90 aa). Residues Cys37, Cys42, Cys45, and Cys75 each coordinate [2Fe-2S] cluster.

It belongs to the 2Fe2S plant-type ferredoxin family. [2Fe-2S] cluster is required as a cofactor.

The protein localises to the plastid. It is found in the chloroplast. In terms of biological role, ferredoxins are iron-sulfur proteins that transfer electrons in a wide variety of metabolic reactions. This is Ferredoxin-2 from Equisetum arvense (Field horsetail).